The following is a 536-amino-acid chain: DEAD-box ATP-dependent RNA helicase 26 (536 aa).

Residues 1-44 (MMSGGPSDATHRKRRRRRGPKGSGVDGPSIPRAVTTNGAGPEEE) form a disordered region. Basic residues predominate over residues 11 to 20 (HRKRRRRRGP). The short motif at 74-102 (TRFDQCPVSPLSLKAIKDAGYEKMTQVQE) is the Q motif element. The 178-residue stretch at 105–282 (LPIILQGEDV…HIAMKRGYKF (178 aa)) folds into the Helicase ATP-binding domain. 118–125 (AKTGTGKT) contacts ATP. The DEAD box motif lies at 230–233 (DEAD). Residues 316 to 466 (VLKKHIAEDA…SIQTGVKDAL (151 aa)) enclose the Helicase C-terminal domain.

It belongs to the DEAD box helicase family.

The enzyme catalyses ATP + H2O = ADP + phosphate + H(+). In Oryza sativa subsp. japonica (Rice), this protein is DEAD-box ATP-dependent RNA helicase 26.